A 300-amino-acid polypeptide reads, in one-letter code: Ribosomal protein L11 methyltransferase (300 aa).

The S-adenosyl-L-methionine site is built by T152, G173, D195, and N234.

This sequence belongs to the methyltransferase superfamily. PrmA family.

It localises to the cytoplasm. It catalyses the reaction L-lysyl-[protein] + 3 S-adenosyl-L-methionine = N(6),N(6),N(6)-trimethyl-L-lysyl-[protein] + 3 S-adenosyl-L-homocysteine + 3 H(+). Methylates ribosomal protein L11. This chain is Ribosomal protein L11 methyltransferase, found in Burkholderia mallei (strain NCTC 10247).